Here is a 365-residue protein sequence, read N- to C-terminus: Putative agmatine deiminase (365 aa).

Positions 214 and 220 each coordinate agmatine. Cys357 serves as the catalytic Amidino-cysteine intermediate.

Belongs to the agmatine deiminase family. As to quaternary structure, tetramer of two homodimers.

The enzyme catalyses agmatine + H2O = N-carbamoylputrescine + NH4(+). This Enterococcus faecalis (strain ATCC 700802 / V583) protein is Putative agmatine deiminase.